A 202-amino-acid chain; its full sequence is 3-isopropylmalate dehydratase small subunit 1 (202 aa).

The protein belongs to the LeuD family. LeuD type 1 subfamily. Heterodimer of LeuC and LeuD.

It carries out the reaction (2R,3S)-3-isopropylmalate = (2S)-2-isopropylmalate. The protein operates within amino-acid biosynthesis; L-leucine biosynthesis; L-leucine from 3-methyl-2-oxobutanoate: step 2/4. Catalyzes the isomerization between 2-isopropylmalate and 3-isopropylmalate, via the formation of 2-isopropylmaleate. The protein is 3-isopropylmalate dehydratase small subunit 1 of Mannheimia succiniciproducens (strain KCTC 0769BP / MBEL55E).